The following is a 211-amino-acid chain: MPHGHSHDHGGCGHEATDVDHALEMGIEYSLYTKIDAENLECLNEETEGSGKTVFKPYESRQDMSKFVQSDADEELLFNIPFTGNIKLKGIIICGANDDSHPNKVKIFKNRPKMTFDDAKVKVDQEFELTRDPRGEIEYSPKVVNFSSVHHLTLYFPSNFGDDKTRIYYIGLRGEFSEAHYHGVTICNYEARANAADHKDKVFDGVGRAIQ.

The PITH domain maps to 20–192 (DHALEMGIEY…GVTICNYEAR (173 aa)).

It belongs to the PITHD1 family.

This chain is PITH domain-containing protein GA19395, found in Drosophila pseudoobscura pseudoobscura (Fruit fly).